We begin with the raw amino-acid sequence, 360 residues long: Histidinol-phosphate aminotransferase (360 aa).

Lysine 223 is subject to N6-(pyridoxal phosphate)lysine.

Belongs to the class-II pyridoxal-phosphate-dependent aminotransferase family. Histidinol-phosphate aminotransferase subfamily. Homodimer. Requires pyridoxal 5'-phosphate as cofactor.

It carries out the reaction L-histidinol phosphate + 2-oxoglutarate = 3-(imidazol-4-yl)-2-oxopropyl phosphate + L-glutamate. The protein operates within amino-acid biosynthesis; L-histidine biosynthesis; L-histidine from 5-phospho-alpha-D-ribose 1-diphosphate: step 7/9. The sequence is that of Histidinol-phosphate aminotransferase from Bacillus subtilis subsp. natto.